Here is a 287-residue protein sequence, read N- to C-terminus: O-ureido-serine racemase (287 aa).

Asn20 is a binding site for substrate. Cys81 functions as the Proton donor in the catalytic mechanism. Substrate-binding positions include 82–83, Asn167, Asn200, and 218–219; these read GN and EY. Cys227 serves as the catalytic Proton acceptor. Position 228 to 229 (228 to 229) interacts with substrate; that stretch reads GS.

It belongs to the diaminopimelate epimerase family. As to quaternary structure, monomer.

The protein resides in the cytoplasm. The enzyme catalyses O-ureido-L-serine = O-ureido-D-serine. Its activity is regulated as follows. Inhibited by thiol-inactivating reagents such as iodoacetamide and Hg(2+) ions. Involved in the biosynthesis of the antibiotic D-cycloserine (DCS), a cyclic structural analog of D-alanine, used as an antitubercular agent. Catalyzes the stereoinversion of O-ureido-L-serine to O-ureido-D-serine. The protein is O-ureido-serine racemase of Streptomyces lavendulae.